Reading from the N-terminus, the 173-residue chain is Adenine phosphoribosyltransferase (173 aa).

Belongs to the purine/pyrimidine phosphoribosyltransferase family. As to quaternary structure, homodimer.

It localises to the cytoplasm. It carries out the reaction AMP + diphosphate = 5-phospho-alpha-D-ribose 1-diphosphate + adenine. The protein operates within purine metabolism; AMP biosynthesis via salvage pathway; AMP from adenine: step 1/1. Its function is as follows. Catalyzes a salvage reaction resulting in the formation of AMP, that is energically less costly than de novo synthesis. The polypeptide is Adenine phosphoribosyltransferase (Listeria monocytogenes serovar 1/2a (strain ATCC BAA-679 / EGD-e)).